A 468-amino-acid chain; its full sequence is Nicotinamide phosphoribosyltransferase (468 aa).

A diphosphate-binding site is contributed by R180. Beta-nicotinamide D-ribonucleotide is bound at residue D203. Diphosphate contacts are provided by H229 and R293. Residue H229 is modified to Phosphohistidine; by autocatalysis. Residues D335 and R373 each coordinate beta-nicotinamide D-ribonucleotide.

Belongs to the NAPRTase family. As to quaternary structure, homodimer. The dimeric structure consists of two protomers arranged head to tail, with domain A on one protomer interacting with domain B on the other protomer. Phosphorylation at His-229 plays a crucial role in enhancing the substrate affinity and is important for maintaining enzymatic activity.

It catalyses the reaction beta-nicotinamide D-ribonucleotide + diphosphate = 5-phospho-alpha-D-ribose 1-diphosphate + nicotinamide + H(+). The protein operates within cofactor biosynthesis; NAD(+) biosynthesis; nicotinamide D-ribonucleotide from 5-phospho-alpha-D-ribose 1-diphosphate and nicotinamide: step 1/1. ATP-dependent autophosphorylation plays a vital role in nicotinamide binding and enzyme activation. Activity is inhibited by FK866. Catalyzes the condensation of nicotinamide with 5-phosphoribosyl-1-pyrophosphate to yield nicotinamide mononucleotide, an intermediate in the biosynthesis of NAD. Plays an important role in the biosynthesis of NAD via the nicotinamide (NAM) salvage pathway. Is also capable of hydrolyzing ATP and shows ATP-dependent autophosphorylation activity. In Xanthomonas campestris pv. campestris (strain 8004), this protein is Nicotinamide phosphoribosyltransferase.